Consider the following 121-residue polypeptide: uncharacterized protein (121 aa).

The helical transmembrane segment at 65–84 (TILFYTPTLICFLFLQNFLY) threads the bilayer.

The protein localises to the membrane. This is an uncharacterized protein from Saccharomyces cerevisiae (strain ATCC 204508 / S288c) (Baker's yeast).